Here is a 130-residue protein sequence, read N- to C-terminus: Small ribosomal subunit protein uS11c (130 aa).

The protein belongs to the universal ribosomal protein uS11 family. In terms of assembly, part of the 30S ribosomal subunit.

Its subcellular location is the plastid. It localises to the chloroplast. The protein is Small ribosomal subunit protein uS11c of Chlorokybus atmophyticus (Soil alga).